The chain runs to 916 residues: Protein O-GlcNAcase (916 aa).

The disordered stretch occupies residues 1 to 46; that stretch reads MVQKESQAALEERESERNANPAAASGASLEQSVAPAPGEDNPSGAG. Residues 60–336 enclose the GH84 domain; the sequence is FLCGVVEGFY…TLATWYKSNM (277 aa). Residues Gly67, Lys98, and Asp174 each contribute to the a protein site. Asp175 (proton donor) is an active-site residue. Residues Tyr219, 278-280, Asp285, and Asn313 each bind a protein; that span reads WDN. The residue at position 364 (Ser364) is a Phosphoserine. The disordered stretch occupies residues 443-465; the sequence is ALSGEPSVLTKEEEKKQPDEEPM. The span at 452-461 shows a compositional bias: basic and acidic residues; that stretch reads TKEEEKKQPD.

The protein belongs to the glycosyl hydrolase 84 family. In terms of assembly, monomer. Interacts with CLOCK. Proteolytically cleaved by caspase-3 during apoptosis. The fragments interact with each other; cleavage does not decrease enzyme activity.

Its subcellular location is the cytoplasm. It localises to the nucleus. It carries out the reaction 3-O-(N-acetyl-beta-D-glucosaminyl)-L-seryl-[protein] + H2O = N-acetyl-D-glucosamine + L-seryl-[protein]. The catalysed reaction is 3-O-(N-acetyl-beta-D-glucosaminyl)-L-threonyl-[protein] + H2O = L-threonyl-[protein] + N-acetyl-D-glucosamine. Cleaves GlcNAc but not GalNAc from O-glycosylated proteins. Deglycosylates a large and diverse number of proteins, such as CRYAB, ELK1, GSDMD, LMNB1 and TAB1. Can use p-nitrophenyl-beta-GlcNAc and 4-methylumbelliferone-GlcNAc as substrates but not p-nitrophenyl-beta-GalNAc or p-nitrophenyl-alpha-GlcNAc (in vitro). Does not bind acetyl-CoA and does not have histone acetyltransferase activity. This is Protein O-GlcNAcase from Mus musculus (Mouse).